Reading from the N-terminus, the 479-residue chain is Aryl-phospho-beta-D-glucosidase BglA (479 aa).

E176 (proton donor) is an active-site residue. The active-site Nucleophile is E377.

This sequence belongs to the glycosyl hydrolase 1 family.

The enzyme catalyses 6-phospho-beta-D-glucosyl-(1-&gt;4)-D-glucose + H2O = D-glucose 6-phosphate + D-glucose. Functionally, catalyzes the hydrolysis of aryl-phospho-beta-D-glucosides such as 4-methylumbelliferyl-phospho-beta-D-glucopyranoside (MUG-P), phosphoarbutin and phosphosalicin. Plays a major role in the utilization of arbutin or salicin as the sole carbon source. BglA and BglH are the major proteins contributing to hydrolysis of MUG-P by extracts of late-exponential-phase or stationary-phase B.subtilis cells. In Bacillus subtilis (strain 168), this protein is Aryl-phospho-beta-D-glucosidase BglA (bglA).